We begin with the raw amino-acid sequence, 350 residues long: Blue-sensitive opsin (350 aa).

Topologically, residues 1–36 are extracellular; the sequence is MNGTEGPNFYVPMSNATGVVRSPFEYPQYYLAEPWA. N-linked (GlcNAc...) asparagine glycans are attached at residues asparagine 2 and asparagine 15. A helical transmembrane segment spans residues 37 to 61; sequence FSILAAYMFFLIITGFPINFLTLYV. Residues 62 to 73 are Cytoplasmic-facing; sequence TIEHKKLRTPLN. Residues 74 to 98 traverse the membrane as a helical segment; the sequence is YILLNLAVADLFMVFGGFTTTMYTS. Residues 99–113 lie on the Extracellular side of the membrane; sequence MHGYFVFGETGCNLE. Cysteines 110 and 187 form a disulfide. Residues 114–133 form a helical membrane-spanning segment; it reads GYFATLGGEISLWSLVVLAI. Over 134-152 the chain is Cytoplasmic; it reads ERWVVVCKPISNFRFGENH. Residues 153 to 176 form a helical membrane-spanning segment; sequence AIMGLTLTWVMANACAMPPLFGWS. At 177–202 the chain is on the extracellular side; the sequence is RYIPEGLQCSCGIDYYTLKPEVNNES. Asparagine 200 carries N-linked (GlcNAc...) asparagine glycosylation. A helical membrane pass occupies residues 203–230; sequence FVIYMFLVHFTIPLTIISFCYGRLVCAV. At 231-252 the chain is on the cytoplasmic side; the sequence is KEAAAQQQESETTQRAEREVTR. Residues 253-276 traverse the membrane as a helical segment; that stretch reads MVVIMVISFLVCWIPYASVAWYIF. Topologically, residues 277 to 284 are extracellular; sequence THQGSTFG. A helical membrane pass occupies residues 285–309; it reads PIFMTVPSFFAKSSSIYNPMIYICM. Lysine 296 carries the post-translational modification N6-(retinylidene)lysine. At 310–350 the chain is on the cytoplasmic side; the sequence is NKQFRNCMITTLFCGKNPFEGEEEGSTTKTEASAVSSVSPA. A disordered region spans residues 330 to 350; it reads GEEEGSTTKTEASAVSSVSPA.

Belongs to the G-protein coupled receptor 1 family. Opsin subfamily. In terms of processing, phosphorylated on some or all of the serine and threonine residues present in the C-terminal region. As to expression, rod shaped photoreceptor cells which mediates vision in dim light.

It is found in the membrane. In terms of biological role, visual pigments are the light-absorbing molecules that mediate vision. They consist of an apoprotein, opsin, covalently linked to cis-retinal. This chain is Blue-sensitive opsin, found in Conger conger (Conger eel).